The following is a 242-amino-acid chain: Phosphoribosylaminoimidazole-succinocarboxamide synthase (242 aa).

It belongs to the SAICAR synthetase family.

It carries out the reaction 5-amino-1-(5-phospho-D-ribosyl)imidazole-4-carboxylate + L-aspartate + ATP = (2S)-2-[5-amino-1-(5-phospho-beta-D-ribosyl)imidazole-4-carboxamido]succinate + ADP + phosphate + 2 H(+). It participates in purine metabolism; IMP biosynthesis via de novo pathway; 5-amino-1-(5-phospho-D-ribosyl)imidazole-4-carboxamide from 5-amino-1-(5-phospho-D-ribosyl)imidazole-4-carboxylate: step 1/2. The polypeptide is Phosphoribosylaminoimidazole-succinocarboxamide synthase (Prochlorococcus marinus (strain MIT 9303)).